A 314-amino-acid polypeptide reads, in one-letter code: Homoserine kinase (314 aa).

ATP is bound at residue 95–105; the sequence is PHSRGLGSSAA.

It belongs to the GHMP kinase family. Homoserine kinase subfamily.

It localises to the cytoplasm. The enzyme catalyses L-homoserine + ATP = O-phospho-L-homoserine + ADP + H(+). The protein operates within amino-acid biosynthesis; L-threonine biosynthesis; L-threonine from L-aspartate: step 4/5. Functionally, catalyzes the ATP-dependent phosphorylation of L-homoserine to L-homoserine phosphate. The sequence is that of Homoserine kinase from Mycobacterium sp. (strain KMS).